A 274-amino-acid chain; its full sequence is Diaminopimelate epimerase (274 aa).

Residues Asn-11, Gln-44, and Asn-64 each coordinate substrate. Catalysis depends on Cys-73, which acts as the Proton donor. Residues Gly-74–Asn-75, Asn-157, Asn-190, and Glu-208–Arg-209 contribute to the substrate site. The active-site Proton acceptor is the Cys-217. Gly-218–Ser-219 provides a ligand contact to substrate.

This sequence belongs to the diaminopimelate epimerase family. In terms of assembly, homodimer.

The protein resides in the cytoplasm. The enzyme catalyses (2S,6S)-2,6-diaminopimelate = meso-2,6-diaminopimelate. It functions in the pathway amino-acid biosynthesis; L-lysine biosynthesis via DAP pathway; DL-2,6-diaminopimelate from LL-2,6-diaminopimelate: step 1/1. In terms of biological role, catalyzes the stereoinversion of LL-2,6-diaminopimelate (L,L-DAP) to meso-diaminopimelate (meso-DAP), a precursor of L-lysine and an essential component of the bacterial peptidoglycan. The protein is Diaminopimelate epimerase of Shigella flexneri serotype 5b (strain 8401).